We begin with the raw amino-acid sequence, 676 residues long: UvrABC system protein C (676 aa).

Positions 16 to 95 (VEPGVYRFRD…IKEFDPRFNI (80 aa)) constitute a GIY-YIG domain. Positions 208–243 (DRLVRDLERKMTAAAEDLDFERAARLRDDIGALRRA) constitute a UVR domain.

It belongs to the UvrC family. In terms of assembly, interacts with UvrB in an incision complex.

The protein resides in the cytoplasm. Its function is as follows. The UvrABC repair system catalyzes the recognition and processing of DNA lesions. UvrC both incises the 5' and 3' sides of the lesion. The N-terminal half is responsible for the 3' incision and the C-terminal half is responsible for the 5' incision. The protein is UvrABC system protein C of Mycobacterium sp. (strain KMS).